The primary structure comprises 331 residues: Phosphate acyltransferase (331 aa).

The protein belongs to the PlsX family. In terms of assembly, homodimer. Probably interacts with PlsY.

It localises to the cytoplasm. It catalyses the reaction a fatty acyl-[ACP] + phosphate = an acyl phosphate + holo-[ACP]. It participates in lipid metabolism; phospholipid metabolism. In terms of biological role, catalyzes the reversible formation of acyl-phosphate (acyl-PO(4)) from acyl-[acyl-carrier-protein] (acyl-ACP). This enzyme utilizes acyl-ACP as fatty acyl donor, but not acyl-CoA. The polypeptide is Phosphate acyltransferase (Malacoplasma penetrans (strain HF-2) (Mycoplasma penetrans)).